A 132-amino-acid polypeptide reads, in one-letter code: ATP synthase epsilon chain (132 aa).

It belongs to the ATPase epsilon chain family. As to quaternary structure, F-type ATPases have 2 components, CF(1) - the catalytic core - and CF(0) - the membrane proton channel. CF(1) has five subunits: alpha(3), beta(3), gamma(1), delta(1), epsilon(1). CF(0) has four main subunits: a, b, b' and c.

It is found in the cellular chromatophore membrane. Its function is as follows. Produces ATP from ADP in the presence of a proton gradient across the membrane. The protein is ATP synthase epsilon chain (atpC) of Rhodobacter capsulatus (Rhodopseudomonas capsulata).